The chain runs to 433 residues: MRYERVKGTVDIFGQDIPYWYFVEQRAIQVALLFGYKEIRTPVFEQTELFARSVGQETDIVQKEMYTFTDKGGRSITLRPEGTAPTIRAFLENSMINLGLPQRFYYLGPMFRYERPQAGRLRQFHQFGIELIGSADPAADVETIQLAKMFLDSLELKKYKIYINSIGCQECRRAYKEALRSYYEHHYDHICDDCKRRFETNIMRLLDCKVDINVAKQAPKISDYLCDHCRDHYESIKQMLTDLRVYFHEDSSLVRGLDYYTRTVFEIKHESLGAQSTILAGGRYDGLCKELGGHDIPSLGFASGIERLILAVKAEEIEIPKPPYCDVYIASIGKQARVKAFQIAQGLRLCKIPVISDVNSRSLKAQLKHADKLGAILAIIIGENELAQSTVQVKNLLTETQSEVEFDYVVDYVLDLLKVEGRKGRGFREGNNT.

This sequence belongs to the class-II aminoacyl-tRNA synthetase family. As to quaternary structure, homodimer.

Its subcellular location is the cytoplasm. It carries out the reaction tRNA(His) + L-histidine + ATP = L-histidyl-tRNA(His) + AMP + diphosphate + H(+). The chain is Histidine--tRNA ligase from Pseudothermotoga lettingae (strain ATCC BAA-301 / DSM 14385 / NBRC 107922 / TMO) (Thermotoga lettingae).